Here is a 375-residue protein sequence, read N- to C-terminus: tRNA-specific 2-thiouridylase MnmA (375 aa).

Residues 12-19 (GMSGGVDS) and Met38 contribute to the ATP site. The tract at residues 98 to 100 (NPD) is interaction with target base in tRNA. Residue Cys103 is the Nucleophile of the active site. The cysteines at positions 103 and 200 are disulfide-linked. Gly127 is an ATP binding site. Residues 150 to 152 (KDQ) form an interaction with tRNA region. Cys200 serves as the catalytic Cysteine persulfide intermediate. Residues 312–313 (RY) form an interaction with tRNA region.

The protein belongs to the MnmA/TRMU family.

It localises to the cytoplasm. It carries out the reaction S-sulfanyl-L-cysteinyl-[protein] + uridine(34) in tRNA + AH2 + ATP = 2-thiouridine(34) in tRNA + L-cysteinyl-[protein] + A + AMP + diphosphate + H(+). Functionally, catalyzes the 2-thiolation of uridine at the wobble position (U34) of tRNA, leading to the formation of s(2)U34. The sequence is that of tRNA-specific 2-thiouridylase MnmA from Lactobacillus helveticus (strain DPC 4571).